We begin with the raw amino-acid sequence, 372 residues long: Maltose/maltodextrin import ATP-binding protein MalK (372 aa).

Residues 4-234 (VSLRNVGKSY…PANRFVAGFI (231 aa)) enclose the ABC transporter domain. An ATP-binding site is contributed by 36–43 (GPSGCGKS).

It belongs to the ABC transporter superfamily. Maltooligosaccharide importer (TC 3.A.1.1.1) family. As to quaternary structure, the complex is composed of two ATP-binding proteins (MalK), two transmembrane proteins (MalG and MalK) and a solute-binding protein (MalE).

The protein localises to the cell inner membrane. It catalyses the reaction D-maltose(out) + ATP + H2O = D-maltose(in) + ADP + phosphate + H(+). Functionally, part of the ABC transporter complex MalEFGK involved in maltose/maltodextrin import. Responsible for energy coupling to the transport system. The protein is Maltose/maltodextrin import ATP-binding protein MalK of Mannheimia succiniciproducens (strain KCTC 0769BP / MBEL55E).